A 520-amino-acid polypeptide reads, in one-letter code: Peptide chain release factor 3 (520 aa).

The tr-type G domain maps to 8–277 (ESRKTFAIIS…HAPMPNARQT (270 aa)). GTP contacts are provided by residues 17–24 (SHPDAGKT), 85–89 (DTPGH), and 139–142 (NKLD).

It belongs to the TRAFAC class translation factor GTPase superfamily. Classic translation factor GTPase family. PrfC subfamily.

Its subcellular location is the cytoplasm. Functionally, increases the formation of ribosomal termination complexes and stimulates activities of RF-1 and RF-2. It binds guanine nucleotides and has strong preference for UGA stop codons. It may interact directly with the ribosome. The stimulation of RF-1 and RF-2 is significantly reduced by GTP and GDP, but not by GMP. This is Peptide chain release factor 3 from Staphylococcus epidermidis (strain ATCC 35984 / DSM 28319 / BCRC 17069 / CCUG 31568 / BM 3577 / RP62A).